The sequence spans 208 residues: Large ribosomal subunit protein uL4 (208 aa).

Belongs to the universal ribosomal protein uL4 family. As to quaternary structure, part of the 50S ribosomal subunit.

In terms of biological role, one of the primary rRNA binding proteins, this protein initially binds near the 5'-end of the 23S rRNA. It is important during the early stages of 50S assembly. It makes multiple contacts with different domains of the 23S rRNA in the assembled 50S subunit and ribosome. Forms part of the polypeptide exit tunnel. The chain is Large ribosomal subunit protein uL4 from Solibacter usitatus (strain Ellin6076).